The chain runs to 123 residues: Small ribosomal subunit protein uS12c (123 aa).

Belongs to the universal ribosomal protein uS12 family. In terms of assembly, part of the 30S ribosomal subunit.

The protein localises to the plastid. The protein resides in the chloroplast. Its function is as follows. With S4 and S5 plays an important role in translational accuracy. Located at the interface of the 30S and 50S subunits. The protein is Small ribosomal subunit protein uS12c (rps12) of Pinus thunbergii (Japanese black pine).